We begin with the raw amino-acid sequence, 88 residues long: Beta-insect excitatory toxin LqhIT1a (88 aa).

Residues 1-18 (MKFFLLFLVVLPIMGVLG) form the signal peptide. Residues 20–83 (KNGYAVDSKG…ISGTTKKYCD (64 aa)) enclose the LCN-type CS-alpha/beta domain. 4 cysteine pairs are disulfide-bonded: Cys34-Cys55, Cys40-Cys60, Cys44-Cys62, and Cys56-Cys82.

The protein belongs to the long (4 C-C) scorpion toxin superfamily. Sodium channel inhibitor family. Beta subfamily. In terms of tissue distribution, expressed by the venom gland.

It is found in the secreted. Excitatory insect toxins induce a spastic paralysis. They bind voltage-independently at site-4 of sodium channels (Nav) and shift the voltage of activation toward more negative potentials thereby affecting sodium channel activation and promoting spontaneous and repetitive firing. This chain is Beta-insect excitatory toxin LqhIT1a, found in Leiurus hebraeus (Hebrew deathstalker scorpion).